A 169-amino-acid chain; its full sequence is Putative pre-16S rRNA nuclease (169 aa).

Basic and acidic residues predominate over residues 1 to 19 (MTDSDHRLPDRPGEGDPGR). The tract at residues 1 to 22 (MTDSDHRLPDRPGEGDPGRGRR) is disordered.

It belongs to the YqgF nuclease family.

The protein localises to the cytoplasm. Its function is as follows. Could be a nuclease involved in processing of the 5'-end of pre-16S rRNA. The protein is Putative pre-16S rRNA nuclease of Mycobacterium sp. (strain JLS).